The following is a 242-amino-acid chain: UPF0309 protein BOV_A0853 (242 aa).

The SIS domain occupies Ala30 to Gly209.

The protein belongs to the UPF0309 family.

In Brucella ovis (strain ATCC 25840 / 63/290 / NCTC 10512), this protein is UPF0309 protein BOV_A0853.